A 125-amino-acid chain; its full sequence is Large ribosomal subunit protein uL18 (125 aa).

The protein belongs to the universal ribosomal protein uL18 family. As to quaternary structure, part of the 50S ribosomal subunit; part of the 5S rRNA/L5/L18/L25 subcomplex. Contacts the 5S and 23S rRNAs.

Its function is as follows. This is one of the proteins that bind and probably mediate the attachment of the 5S RNA into the large ribosomal subunit, where it forms part of the central protuberance. The chain is Large ribosomal subunit protein uL18 from Anaplasma marginale (strain Florida).